The following is a 72-amino-acid chain: Cell division protein ZapB (72 aa).

Positions 1–72 form a coiled coil; the sequence is MSLEILDQLE…RSLLGKIDNV (72 aa). Positions 33–57 are disordered; the sequence is KNNQSQQANDALRSENEQLKSEHQN. A compositionally biased stretch (basic and acidic residues) spans 44 to 57; the sequence is LRSENEQLKSEHQN.

This sequence belongs to the ZapB family. Homodimer. The ends of the coiled-coil dimer bind to each other, forming polymers. Interacts with FtsZ.

It localises to the cytoplasm. Non-essential, abundant cell division factor that is required for proper Z-ring formation. It is recruited early to the divisome by direct interaction with FtsZ, stimulating Z-ring assembly and thereby promoting cell division earlier in the cell cycle. Its recruitment to the Z-ring requires functional FtsA or ZipA. The polypeptide is Cell division protein ZapB (Pasteurella multocida (strain Pm70)).